A 385-amino-acid polypeptide reads, in one-letter code: Prophage integrase IntS (385 aa).

Residues 91–172 (NSFSAIYKEW…RCGEVFRYAI (82 aa)) enclose the Core-binding (CB) domain. In terms of domain architecture, Tyr recombinase spans 195–373 (KNFPFLPADQ…QYLDKRREMM (179 aa)). Residues arginine 234, lysine 261, histidine 324, arginine 327, and histidine 350 contribute to the active site. The O-(3'-phospho-DNA)-tyrosine intermediate role is filled by tyrosine 360.

It belongs to the 'phage' integrase family.

In terms of biological role, integrase is necessary for integration of the phage into the host genome by site-specific recombination. In conjunction with excisionase, integrase is also necessary for excision of the prophage from the host genome. The chain is Prophage integrase IntS (intS) from Escherichia coli (strain K12).